A 295-amino-acid chain; its full sequence is Glutamate-binding protein GluB (295 aa).

The N-terminal stretch at 1 to 26 is a signal peptide; the sequence is MSAKRTFTRIGAILGATALAGVTLTA. Cys-27 carries N-palmitoyl cysteine lipidation. A lipid anchor (S-diacylglycerol cysteine) is attached at Cys-27.

This sequence belongs to the bacterial solute-binding protein 3 family. In terms of assembly, the complex is composed of two ATP-binding proteins (GluA), two transmembrane proteins (GluC and GluD) and a solute-binding protein (GluB).

Its subcellular location is the cell membrane. Binding of glutamate or asparatate induces a higher thermal stability of the protein structure. In terms of biological role, part of the ABC transporter complex GluABCD involved in glutamate uptake. Binds glutamate with a high affinity. Also binds aspartate with high affinity, suggesting that GluB could be involved in the transport of both amino acid residues into the cell. The sequence is that of Glutamate-binding protein GluB from Corynebacterium glutamicum (strain ATCC 13032 / DSM 20300 / JCM 1318 / BCRC 11384 / CCUG 27702 / LMG 3730 / NBRC 12168 / NCIMB 10025 / NRRL B-2784 / 534).